Reading from the N-terminus, the 1132-residue chain is Ubiquitin carboxyl-terminal hydrolase 43 (1132 aa).

The disordered stretch occupies residues 1 to 103; that stretch reads MDPGVGNALG…GARPPGAQGL (103 aa). The segment covering 17–28 has biased composition (basic residues); it reads RPRRRRSLRRLL. 2 stretches are compositionally biased toward low complexity: residues 29–44 and 63–78; these read NRFL…SGDS and FACA…GSPG. Residues 101–710 form the USP domain; that stretch reads QGLKNHGNTC…GAYILFYQKR (610 aa). Catalysis depends on cysteine 110, which acts as the Nucleophile. The active-site Proton acceptor is histidine 668. Arginine 746 bears the Asymmetric dimethylarginine mark. Disordered stretches follow at residues 839-891, 935-1008, 1024-1044, and 1057-1106; these read RRRP…TGVP, TVMP…RGQG, RTVR…SDRL, and RESP…GEQI. Over residues 941 to 950 the composition is skewed to basic and acidic residues; that stretch reads GDEKPARPEG. The span at 958–967 shows a compositional bias: low complexity; that stretch reads GSSQVGSQSS. Residue serine 970 is modified to Phosphoserine. Residues 994–1006 show a composition bias toward basic and acidic residues; the sequence is AAMEERAPDKDRG.

Belongs to the peptidase C19 family.

The enzyme catalyses Thiol-dependent hydrolysis of ester, thioester, amide, peptide and isopeptide bonds formed by the C-terminal Gly of ubiquitin (a 76-residue protein attached to proteins as an intracellular targeting signal).. Functionally, may recognize and hydrolyze the peptide bond at the C-terminal Gly of ubiquitin. Involved in the processing of poly-ubiquitin precursors as well as that of ubiquitinated proteins. This Mus musculus (Mouse) protein is Ubiquitin carboxyl-terminal hydrolase 43 (Usp43).